The following is a 476-amino-acid chain: Bifunctional protein GlmU (476 aa).

The segment at Met-1 to Pro-235 is pyrophosphorylase. Residues Lys-23, Gln-81, Gly-86 to Thr-87, Ser-108 to Asp-110, Gly-145, Glu-160, and Asn-233 each bind UDP-N-acetyl-alpha-D-glucosamine. Asp-110 contacts Mg(2+). Asn-233 is a Mg(2+) binding site. Residues Ala-236–Gln-256 form a linker region. Residues Gly-257–Gly-476 form an N-acetyltransferase region. Residues Arg-351 and Lys-369 each contribute to the UDP-N-acetyl-alpha-D-glucosamine site. The active-site Proton acceptor is His-381. The UDP-N-acetyl-alpha-D-glucosamine site is built by Tyr-384 and Asn-395. Residues Ala-398, Asn-404–Tyr-405, Ser-423, Gly-441, and Arg-458 contribute to the acetyl-CoA site.

This sequence in the N-terminal section; belongs to the N-acetylglucosamine-1-phosphate uridyltransferase family. The protein in the C-terminal section; belongs to the transferase hexapeptide repeat family. As to quaternary structure, homotrimer. Mg(2+) serves as cofactor.

The protein localises to the cytoplasm. It carries out the reaction alpha-D-glucosamine 1-phosphate + acetyl-CoA = N-acetyl-alpha-D-glucosamine 1-phosphate + CoA + H(+). The catalysed reaction is N-acetyl-alpha-D-glucosamine 1-phosphate + UTP + H(+) = UDP-N-acetyl-alpha-D-glucosamine + diphosphate. It participates in nucleotide-sugar biosynthesis; UDP-N-acetyl-alpha-D-glucosamine biosynthesis; N-acetyl-alpha-D-glucosamine 1-phosphate from alpha-D-glucosamine 6-phosphate (route II): step 2/2. It functions in the pathway nucleotide-sugar biosynthesis; UDP-N-acetyl-alpha-D-glucosamine biosynthesis; UDP-N-acetyl-alpha-D-glucosamine from N-acetyl-alpha-D-glucosamine 1-phosphate: step 1/1. The protein operates within bacterial outer membrane biogenesis; LPS lipid A biosynthesis. Catalyzes the last two sequential reactions in the de novo biosynthetic pathway for UDP-N-acetylglucosamine (UDP-GlcNAc). The C-terminal domain catalyzes the transfer of acetyl group from acetyl coenzyme A to glucosamine-1-phosphate (GlcN-1-P) to produce N-acetylglucosamine-1-phosphate (GlcNAc-1-P), which is converted into UDP-GlcNAc by the transfer of uridine 5-monophosphate (from uridine 5-triphosphate), a reaction catalyzed by the N-terminal domain. The chain is Bifunctional protein GlmU from Acidovorax sp. (strain JS42).